An 880-amino-acid polypeptide reads, in one-letter code: MOG interacting and ectopic P-granules protein 1 (880 aa).

Positions 1 to 20 are enriched in polar residues; that stretch reads MVTSDETVLATTTNKTSITT. Disordered stretches follow at residues 1-37, 82-257, and 350-370; these read MVTSDETVLATTTNKTSITTEPMEPKSSDESTDSETD, DKVE…DDNE, and ERPKLSDSEKRERQQMKQHNP. The segment covering 23 to 37 has biased composition (basic and acidic residues); that stretch reads MEPKSSDESTDSETD. Residues 87 to 105 are compositionally biased toward polar residues; it reads ATNSVVDLSSNGSSATTSV. A compositionally biased stretch (acidic residues) spans 108-120; it reads EEQEEKANEDETN. 2 stretches are compositionally biased toward basic and acidic residues: residues 154 to 170 and 183 to 193; these read SKSDGETETDRVAIKDS and KPEEKEEKNDT. Over residues 215-224 the composition is skewed to acidic residues; that stretch reads QLDDDDDDIQ. 2 stretches are compositionally biased toward basic and acidic residues: residues 235 to 252 and 350 to 364; these read QKTEETKQEPKQEAKAEP and ERPKLSDSEKRERQQ. 2 C2H2-type zinc fingers span residues 436–459 and 465–488; these read SRCGVCGFQTESKLAMAAHKETLH and FQCTLCKETDTNEQRMKEHYFEAH. A CCHC-type zinc finger spans residues 501–523; it reads YPCAICEEDFNFKGVREQHYKQC. C2H2-type zinc fingers lie at residues 728–751, 768–791, 809–830, and 841–864; these read FQCEICDQTVHEKDKYLSHLQVLH, LACSRCRDRFWTYEGLERHLVMSH, GRCKTCGKQYAFNMLQHLVADH, and YSCDVCAFKCSSYQTLEAHLSSTH.

As to quaternary structure, interacts with hda-1, let-418, lin-1, mog-1, mog-4, mog-5, mog-6, pie-1 and unc-98.

It localises to the nucleus. Its function is as follows. Has a broad role in development, specifically in the genetic pathway SynMuvB that negatively regulates specification of the vulval cell fate. Required for fem-3 3'-UTR-mediated repression in the regulation of the sperm/oocyte switch. Acts by regulating the translation of fem-3 mRNA, by binding to its 3'-UTR. This is MOG interacting and ectopic P-granules protein 1 from Caenorhabditis briggsae.